The following is a 114-amino-acid chain: Cytochrome c oxidase assembly protein cox16, mitochondrial (114 aa).

Residues 29–49 (PFLLFGLPFMSVIVAGSFILT) traverse the membrane as a helical segment.

It belongs to the COX16 family.

The protein localises to the mitochondrion inner membrane. Required for the assembly of the mitochondrial respiratory chain complex IV (CIV), also known as cytochrome c oxidase. May participate in merging the COX1 and COX2 assembly lines. In Neurospora crassa (strain ATCC 24698 / 74-OR23-1A / CBS 708.71 / DSM 1257 / FGSC 987), this protein is Cytochrome c oxidase assembly protein cox16, mitochondrial (cox-9).